An 823-amino-acid chain; its full sequence is MKLFGFGSRRGQTAQGSIDHVYTGSGYRIRDSELQKIHRAAVKGDAAEVERCLARRSGDLDALDKQHRTALHLACASGHVQVVTLLVNRKCQIDVCDKENRTPLIQAVHCQEEACAVILLEHGANPNLKDIYGNTALHYAVYSESTSLAEKLLSHGAHIEALDKDNNTPLLFAIICKKEKMVEFLLKRKASSHAVDRLRRSALMLAVYYDSPGIVNILLKQNIDVFAQDMCGRDAEDYAISHHLTKIQQQILEHKKKILKKEKSDVGSSDESAVSIFHELRVDSLPASDDKDLNVATKQCVPEKVSEPLPGSSHEKGNRIVNGQGEGPPAKHPSLKPSTEVEDPAVKGAVQRKNVQTLRAEQALPVASEEEQERHERSEKKQPQVKEGNNTNKSEKIQLSENICDSTSSAAAGRLTQQRKIGKTYPQQFPKKLKEEHDRCTLKQENEEKTNVNMLYKKNREELERKEKQYKKEVEAKQLEPTVQSLEMKSKTARNTPNRDFHNHEEMKGLMDENCILKADIAILRQEICTMKNDNLEKENKYLKDIKIVKETNAALEKYIKLNEEMITETAFRYQQELNDLKAENTRLNAELLKEKESKKRLEADIESYQSRLAAAISKHSESVKTERNLKLALERTRDVSVQVEMSSAISKVKDENEFLTEQLSETQIKFNALKDKFRKTRDSLRKKSLALETVQNDLSQTQQQTQEMKEMYQNAEAKVNNSTGKWNCVEERICHLQRENAWLVQQLDDVHQKEDHKEIVTNIQRGFIESGKKDLVLEEKSKKLMNECDHLKESLFQYEREKTEGVVSIKEDKYFQTSRKKI.

ANK repeat units follow at residues 66-95 (QHRT…QIDV), 99-128 (ENRT…NPNL), 132-161 (YGNT…HIEA), 165-194 (DNNT…SSHA), and 198-227 (LRRS…DVFA). Disordered stretches follow at residues 301–343 (VPEK…EVED) and 355–402 (VQTL…LSEN). The segment covering 372–384 (QERHERSEKKQPQ) has biased composition (basic and acidic residues). Coiled-coil stretches lie at residues 431-480 (KKLK…KQLE), 565-724 (EMIT…NNST), and 776-805 (LVLE…EKTE).

This is Putative ankyrin repeat domain-containing protein 20A2 from Homo sapiens (Human).